Consider the following 135-residue polypeptide: NADH-quinone oxidoreductase subunit K (135 aa).

Helical transmembrane passes span 33–53 (VLGL…FAIG), 63–83 (FLFM…AFVV), and 95–115 (IMFI…LAIL).

It belongs to the complex I subunit 4L family. As to quaternary structure, NDH-1 is composed of 14 different subunits. Subunits NuoA, H, J, K, L, M, N constitute the membrane sector of the complex.

It localises to the cell inner membrane. It catalyses the reaction a quinone + NADH + 5 H(+)(in) = a quinol + NAD(+) + 4 H(+)(out). Functionally, NDH-1 shuttles electrons from NADH, via FMN and iron-sulfur (Fe-S) centers, to quinones in the respiratory chain. The immediate electron acceptor for the enzyme in this species is believed to be ubiquinone. Couples the redox reaction to proton translocation (for every two electrons transferred, four hydrogen ions are translocated across the cytoplasmic membrane), and thus conserves the redox energy in a proton gradient. The protein is NADH-quinone oxidoreductase subunit K of Psychrobacter arcticus (strain DSM 17307 / VKM B-2377 / 273-4).